We begin with the raw amino-acid sequence, 97 residues long: Large ribosomal subunit protein bL27 (97 aa).

Over residues 1–10 (MVKLNLSNLQ) the composition is skewed to polar residues. Positions 1–12 (MVKLNLSNLQHF) are excised as a propeptide. A disordered region spans residues 1 to 38 (MVKLNLSNLQHFAHKKGGGSTSNGRDSQAKRLGAKAAD).

The protein belongs to the bacterial ribosomal protein bL27 family. The N-terminus is cleaved by ribosomal processing cysteine protease Prp.

This chain is Large ribosomal subunit protein bL27, found in Streptococcus equi subsp. zooepidemicus (strain H70).